A 192-amino-acid polypeptide reads, in one-letter code: Der GTPase-activating protein YihI (192 aa).

Residues 1 to 12 show a composition bias toward basic residues; it reads MSAKQPNRKPAG. Disordered regions lie at residues 1–87 and 145–192; these read MSAK…IKEK and DTDD…PKKK. The segment covering 13-26 has biased composition (basic and acidic residues); sequence KRKESDASAQEGRE. Over residues 27–36 the composition is skewed to basic residues; the sequence is RKRAAKRKGL. The segment covering 145 to 172 has biased composition (acidic residues); sequence DTDDDEDEADFDEADFDEPGQPASEEEL. Residues 183-192 are compositionally biased toward basic and acidic residues; it reads PEPKPEPKKK.

This sequence belongs to the YihI family. In terms of assembly, interacts with Der.

In terms of biological role, a GTPase-activating protein (GAP) that modifies Der/EngA GTPase function. May play a role in ribosome biogenesis. The polypeptide is Der GTPase-activating protein YihI (Aeromonas hydrophila subsp. hydrophila (strain ATCC 7966 / DSM 30187 / BCRC 13018 / CCUG 14551 / JCM 1027 / KCTC 2358 / NCIMB 9240 / NCTC 8049)).